Here is a 336-residue protein sequence, read N- to C-terminus: Phospho-N-acetylmuramoyl-pentapeptide-transferase (336 aa).

10 helical membrane-spanning segments follow: residues 3–23 (LSIM…PRFI), 52–72 (MGGT…SIIL), 79–99 (NLGA…IGFL), 123–143 (LIAG…SAIN), 144–164 (IFGF…FWVV), 175–195 (GIDG…GIIA), 201–221 (FDIL…FVFN), 227–247 (VFMG…ISIA), 255–275 (LFIG…VAYF), and 315–335 (VDAF…AILY).

This sequence belongs to the glycosyltransferase 4 family. MraY subfamily. Requires Mg(2+) as cofactor.

The protein localises to the cell membrane. It catalyses the reaction UDP-N-acetyl-alpha-D-muramoyl-L-alanyl-gamma-D-glutamyl-L-lysyl-D-alanyl-D-alanine + di-trans,octa-cis-undecaprenyl phosphate = Mur2Ac(oyl-L-Ala-gamma-D-Glu-L-Lys-D-Ala-D-Ala)-di-trans,octa-cis-undecaprenyl diphosphate + UMP. Its pathway is cell wall biogenesis; peptidoglycan biosynthesis. Its function is as follows. Catalyzes the initial step of the lipid cycle reactions in the biosynthesis of the cell wall peptidoglycan: transfers peptidoglycan precursor phospho-MurNAc-pentapeptide from UDP-MurNAc-pentapeptide onto the lipid carrier undecaprenyl phosphate, yielding undecaprenyl-pyrophosphoryl-MurNAc-pentapeptide, known as lipid I. The protein is Phospho-N-acetylmuramoyl-pentapeptide-transferase of Streptococcus agalactiae serotype Ia (strain ATCC 27591 / A909 / CDC SS700).